The sequence spans 510 residues: Beta-glucosidase 34 (510 aa).

The first 26 residues, M1–A26, serve as a signal peptide directing secretion. N-linked (GlcNAc...) asparagine glycosylation is present at N28. Position 52 (Q52) interacts with a beta-D-glucoside. A glycan (N-linked (GlcNAc...) asparagine) is linked at N120. A beta-D-glucoside is bound by residues H153 and N198 to E199. The Proton donor role is filled by E199. The cysteines at positions 218 and 226 are disulfide-linked. N279 and N331 each carry an N-linked (GlcNAc...) asparagine glycan. Y342 is a binding site for a beta-D-glucoside. A glycan (N-linked (GlcNAc...) asparagine) is linked at N360. A beta-D-glucoside contacts are provided by residues E415, W465, E472–W473, and F481. E415 (nucleophile) is an active-site residue.

This sequence belongs to the glycosyl hydrolase 1 family.

The enzyme catalyses Hydrolysis of terminal, non-reducing beta-D-glucosyl residues with release of beta-D-glucose.. The protein is Beta-glucosidase 34 (BGLU34) of Oryza sativa subsp. japonica (Rice).